The primary structure comprises 479 residues: UDP-glycosyltransferase 85A5 (479 aa).

UDP-alpha-D-glucose-binding positions include Ser301, 358–360 (CPQ), 375–383 (HSGWNSTLE), and 397–400 (FAEQ).

It belongs to the UDP-glycosyltransferase family. As to expression, expressed in roots, shoots and leaves.

This chain is UDP-glycosyltransferase 85A5 (UGT85A5), found in Arabidopsis thaliana (Mouse-ear cress).